Here is a 236-residue protein sequence, read N- to C-terminus: Urease accessory protein UreG 2 (236 aa).

Positions M1–G40 are disordered. A GTP-binding site is contributed by G43 to T50.

Belongs to the SIMIBI class G3E GTPase family. UreG subfamily. Homodimer. UreD, UreF and UreG form a complex that acts as a GTP-hydrolysis-dependent molecular chaperone, activating the urease apoprotein by helping to assemble the nickel containing metallocenter of UreC. The UreE protein probably delivers the nickel.

The protein localises to the cytoplasm. In terms of biological role, facilitates the functional incorporation of the urease nickel metallocenter. This process requires GTP hydrolysis, probably effectuated by UreG. The chain is Urease accessory protein UreG 2 from Saccharopolyspora erythraea (strain ATCC 11635 / DSM 40517 / JCM 4748 / NBRC 13426 / NCIMB 8594 / NRRL 2338).